Here is a 228-residue protein sequence, read N- to C-terminus: Chaperone protein FanE (228 aa).

Residues 1-19 (MNKFISIIALCVFSSYANA) form the signal peptide. An intrachain disulfide couples cysteine 157 to cysteine 198.

This sequence belongs to the periplasmic pilus chaperone family.

It localises to the periplasm. In terms of biological role, mediates assembly of pili by forming soluble multimeric complexes with pili subunits as an intermediate step in the assembly process. This protein is involved in K99 pili assembly. The chain is Chaperone protein FanE (fanE) from Escherichia coli.